Here is a 332-residue protein sequence, read N- to C-terminus: Ornithine carbamoyltransferase, catabolic (332 aa).

Residues 60-63, glutamine 87, arginine 111, and 138-141 each bind carbamoyl phosphate; these read STRT and HPTQ. L-ornithine-binding positions include asparagine 170, aspartate 230, and 234–235; that span reads SM. Carbamoyl phosphate contacts are provided by residues 271–272 and arginine 316; that span reads CL.

The protein belongs to the aspartate/ornithine carbamoyltransferase superfamily. OTCase family.

Its subcellular location is the cytoplasm. It carries out the reaction carbamoyl phosphate + L-ornithine = L-citrulline + phosphate + H(+). The protein operates within amino-acid degradation; L-arginine degradation via ADI pathway; carbamoyl phosphate from L-arginine: step 2/2. Reversibly catalyzes the transfer of the carbamoyl group from carbamoyl phosphate (CP) to the N(epsilon) atom of ornithine (ORN) to produce L-citrulline. In Bacillus thuringiensis subsp. konkukian (strain 97-27), this protein is Ornithine carbamoyltransferase, catabolic.